The sequence spans 412 residues: D-amino acid dehydrogenase 3 (412 aa).

4–18 is an FAD binding site; the sequence is IVVIGAGIAGVSTAY.

It belongs to the DadA oxidoreductase family. The cofactor is FAD.

The enzyme catalyses a D-alpha-amino acid + A + H2O = a 2-oxocarboxylate + AH2 + NH4(+). Its function is as follows. Oxidative deamination of D-amino acids. This Mesorhizobium japonicum (strain LMG 29417 / CECT 9101 / MAFF 303099) (Mesorhizobium loti (strain MAFF 303099)) protein is D-amino acid dehydrogenase 3 (dadA3).